We begin with the raw amino-acid sequence, 150 residues long: Protein-arginine-phosphatase (150 aa).

The active-site Nucleophile is Cys7. Substrate is bound at residue 8 to 13; sequence TGNTCR. The active site involves Arg13. Asp118 functions as the Proton donor/acceptor in the catalytic mechanism.

It belongs to the low molecular weight phosphotyrosine protein phosphatase family.

It carries out the reaction N(omega)-phospho-L-arginyl-[protein] + H2O = L-arginyl-[protein] + phosphate. Its activity is regulated as follows. Efficiently inhibited by Cu(2+) ion, Zn(2+) ion, sodium pyrophosphate and N-ethylmaleimide, while the addition of Mg(2+), Ca(2+) or Fe(3+) ions has minimal effect. Inhibited in a competitive manner by vanadate. Catalyzes the specific dephosphorylation of phosphoarginine residues in a large number of proteins. Counteracts the protein arginine kinase McsB in vivo. Can dephosphorylate CtsR-P; thus, can restore the DNA-binding ability of the CtsR repressor by reversing the McsB-mediated phosphorylation. Is the only active pArg phosphatase present in B.subtilis. Exhibits almost no activity against pSer, pThr, or pTyr peptides. Appears to play a role in B.subtilis stress resistance. Protein arginine phosphorylation has a physiologically important role and is involved in the regulation of many critical cellular processes, such as protein homeostasis, motility, competence, and stringent and stress responses, by regulating gene expression and protein activity. The polypeptide is Protein-arginine-phosphatase (ywlE) (Bacillus subtilis (strain 168)).